Reading from the N-terminus, the 335-residue chain is Vitamin B12 import system permease protein BtuC (335 aa).

A run of 9 helical transmembrane segments spans residues 21-43 (FLAI…GENW), 63-82 (FPRV…AGAV), 95-114 (GLLG…VLMF), 119-141 (PFWL…LLTF), 153-175 (LLVG…YFST), 195-212 (WRHQ…IWLS), 244-266 (FAVG…IGLV), 281-303 (TLLP…LSRL), and 310-329 (VPIG…WLLL).

This sequence belongs to the binding-protein-dependent transport system permease family. FecCD subfamily. The complex is composed of two ATP-binding proteins (BtuD), two transmembrane proteins (BtuC) and a solute-binding protein (BtuF).

It localises to the cell inner membrane. Its function is as follows. Part of the ABC transporter complex BtuCDF involved in vitamin B12 import. Involved in the translocation of the substrate across the membrane. In Photorhabdus laumondii subsp. laumondii (strain DSM 15139 / CIP 105565 / TT01) (Photorhabdus luminescens subsp. laumondii), this protein is Vitamin B12 import system permease protein BtuC.